The chain runs to 365 residues: Mitogen-activated protein kinase p38b (365 aa).

Residues 24–311 (YQNLQPVGQG…AEQALAHPYM (288 aa)) form the Protein kinase domain. ATP-binding positions include 30–38 (VGQGAYGQV) and lysine 53. Residue aspartate 153 is the Proton acceptor of the active site. Position 183 is a phosphothreonine (threonine 183). Positions 183-185 (TGY) match the TXY motif. The residue at position 185 (tyrosine 185) is a Phosphotyrosine.

This sequence belongs to the protein kinase superfamily. CMGC Ser/Thr protein kinase family. MAP kinase subfamily. Mg(2+) is required as a cofactor. Post-translationally, dually phosphorylated on Thr-183 and Tyr-185, which activates the enzyme. At mid-embryogenesis, highest expression is seen in developing anterior and posterior midguts. Almost ubiquitous expression throughout all development.

It is found in the nucleus. It catalyses the reaction L-seryl-[protein] + ATP = O-phospho-L-seryl-[protein] + ADP + H(+). It carries out the reaction L-threonyl-[protein] + ATP = O-phospho-L-threonyl-[protein] + ADP + H(+). Its activity is regulated as follows. Activated by threonine and tyrosine phosphorylation by Mkk3. Its function is as follows. Kinase involved in dpp signal transduction pathway in the process of wing morphogenesis when the levels of dpp are enhanced or inhibited. May down-regulate insect immunity gene expression after prolonged infection. This is Mitogen-activated protein kinase p38b from Drosophila melanogaster (Fruit fly).